Reading from the N-terminus, the 224-residue chain is Octanoyltransferase (224 aa).

Positions 33–213 (GTTAETMLLL…ALQAEFGREA (181 aa)) constitute a BPL/LPL catalytic domain. Residues 51–71 (GKRTTDDERPTDGTPVVDVDR) form a disordered region. Residues 71–78 (RGGKITWH), 143–145 (AIG), and 156–158 (GFA) contribute to the substrate site. Cys174 acts as the Acyl-thioester intermediate in catalysis.

Belongs to the LipB family.

It is found in the cytoplasm. It catalyses the reaction octanoyl-[ACP] + L-lysyl-[protein] = N(6)-octanoyl-L-lysyl-[protein] + holo-[ACP] + H(+). It participates in protein modification; protein lipoylation via endogenous pathway; protein N(6)-(lipoyl)lysine from octanoyl-[acyl-carrier-protein]: step 1/2. Catalyzes the transfer of endogenously produced octanoic acid from octanoyl-acyl-carrier-protein onto the lipoyl domains of lipoate-dependent enzymes. Lipoyl-ACP can also act as a substrate although octanoyl-ACP is likely to be the physiological substrate. The polypeptide is Octanoyltransferase (Leifsonia xyli subsp. xyli (strain CTCB07)).